The primary structure comprises 579 residues: MKKLFLFFTLIFTAFAANSGLFDKKQTFLKVDDAFAFSATLSTDKSQLQAHWDITDGYYLYQDKISAELVGKSNPLSLHTQQAAELHQDPYFGEVKVFTHSIDGIFRGTFNNADDKVEITYQGCTEGFCYPPETKVLRIGDLAISQEQIVEKTVEKNTALLSEQDRLADGLFHSKWTIFGFFLLGLGLAFTPCVLPMLPLLSAIVIGQQQRPNMMRAFSLAFLYVQGMALTYTLLGLAVAAIGLPFQIALQHPYVMIGLSILFVVLALSMFGLFTIQLPNSLQNKLNTWSQKQTSGAFGGAFAMGMIAGLVASPCTSAPLSGALLYVAQSGDLFTGAATLYLLALGMGVPLMLITLFGNKILPKSGEWMNTVKQTFGFVMLALPVFLLSRILPEVWEPRLWAGLATVFFIWFALQMSKNGFGYAIKIISFVLAMVTVQPLQNWIWQTQTTTQSAVENKSVSQVKFKQIKNTEELDRTLAENPHSIAMLDLYADWCVACKEFEKLTFSDPQVQQQFQNILLLQVNMTKNSPENKALMERFNVMGLPTILFFDQQNNEIKGSRVTGFMDADAFSNWLKALH.

The N-terminal stretch at 1–16 (MKKLFLFFTLIFTAFA) is a signal peptide. 2 cysteine pairs are disulfide-bonded: Cys-124/Cys-129 and Cys-193/Cys-315. Helical transmembrane passes span 178-198 (IFGFFLLGLGLAFTPCVLPML), 230-250 (LTYTLLGLAVAAIGLPFQIAL), 254-274 (YVMIGLSILFVVLALSMFGLF), 296-316 (GAFGGAFAMGMIAGLVASPCT), 337-357 (AATLYLLALGMGVPLMLITLF), 376-396 (FGFVMLALPVFLLSRILPEVW), 397-417 (EPRLWAGLATVFFIWFALQMS), and 420-440 (GFGYAIKIISFVLAMVTVQPL). Positions 449–579 (TTTQSAVENK…AFSNWLKALH (131 aa)) constitute a Thioredoxin domain. A disulfide bridge connects residues Cys-495 and Cys-498.

Belongs to the thioredoxin family. DsbD subfamily.

The protein resides in the cell inner membrane. The catalysed reaction is [protein]-dithiol + NAD(+) = [protein]-disulfide + NADH + H(+). The enzyme catalyses [protein]-dithiol + NADP(+) = [protein]-disulfide + NADPH + H(+). Its function is as follows. Required to facilitate the formation of correct disulfide bonds in some periplasmic proteins and for the assembly of the periplasmic c-type cytochromes. Acts by transferring electrons from cytoplasmic thioredoxin to the periplasm. This transfer involves a cascade of disulfide bond formation and reduction steps. The polypeptide is Thiol:disulfide interchange protein DsbD (Haemophilus influenzae (strain PittEE)).